Reading from the N-terminus, the 473-residue chain is Serine carboxypeptidase-like 25 (473 aa).

Positions 1–22 (MAMAKLAIFTTLMAILVMTSQG) are cleaved as a signal peptide. N-linked (GlcNAc...) asparagine glycosylation is found at Asn46 and Asn143. Disulfide bonds link Cys92–Cys358, Cys252–Cys263, and Cys288–Cys326. Residue Ser185 is part of the active site. N-linked (GlcNAc...) asparagine glycans are attached at residues Asn289, Asn299, Asn347, and Asn367. Catalysis depends on residues Asp395 and His447.

The protein belongs to the peptidase S10 family. As to expression, ubiquitous.

It is found in the secreted. Probable carboxypeptidase. In Arabidopsis thaliana (Mouse-ear cress), this protein is Serine carboxypeptidase-like 25 (SCPL25).